A 100-amino-acid polypeptide reads, in one-letter code: Small ribosomal subunit protein uS14c (100 aa).

The protein belongs to the universal ribosomal protein uS14 family. As to quaternary structure, part of the 30S ribosomal subunit.

The protein localises to the plastid. It localises to the chloroplast. Functionally, binds 16S rRNA, required for the assembly of 30S particles. The protein is Small ribosomal subunit protein uS14c of Fagopyrum esculentum subsp. ancestrale (Wild buckwheat).